Here is a 75-residue protein sequence, read N- to C-terminus: MARFFRRRKFCRFTAEGVKSIDYKDLDTLKAYVSETGKIVPSRITGTKAKYQRQLATAIKRARFIALLPYTDSHE.

Belongs to the bacterial ribosomal protein bS18 family. In terms of assembly, part of the 30S ribosomal subunit. Forms a tight heterodimer with protein bS6.

In terms of biological role, binds as a heterodimer with protein bS6 to the central domain of the 16S rRNA, where it helps stabilize the platform of the 30S subunit. The protein is Small ribosomal subunit protein bS18 of Saccharophagus degradans (strain 2-40 / ATCC 43961 / DSM 17024).